A 435-amino-acid polypeptide reads, in one-letter code: Putative pyridoxal-phosphate dependent protein F13B12.4 (435 aa).

A signal peptide spans 1–18 (MKLLLLALFLSISASCLA). N-linked (GlcNAc...) asparagine glycosylation is present at Asn-79. Position 89 is an N6-(pyridoxal phosphate)lysine (Lys-89). Position 235 to 239 (235 to 239 (GTGGT)) interacts with pyridoxal 5'-phosphate. A glycan (N-linked (GlcNAc...) asparagine) is linked at Asn-277. Ser-342 is a binding site for pyridoxal 5'-phosphate.

Belongs to the cysteine synthase/cystathionine beta-synthase family. Highly divergent.

The polypeptide is Putative pyridoxal-phosphate dependent protein F13B12.4 (Caenorhabditis elegans).